The sequence spans 108 residues: Glutaredoxin 4 (108 aa).

A Glutaredoxin domain is found at 4–106 (FQKIKKQIQD…KLILKVKKKY (103 aa)). Lysine 21 is a binding site for glutathione. Cysteine 29 contacts [2Fe-2S] cluster. Glutathione is bound by residues arginine 58, phenylalanine 70, and 83 to 84 (CS).

This sequence belongs to the glutaredoxin family. Monothiol subfamily. As to quaternary structure, homodimer.

It localises to the cytoplasm. Its function is as follows. Monothiol glutaredoxin involved in the biogenesis of iron-sulfur clusters. This is Glutaredoxin 4 (grxD) from Buchnera aphidicola subsp. Acyrthosiphon pisum (strain APS) (Acyrthosiphon pisum symbiotic bacterium).